The chain runs to 1038 residues: Pentatricopeptide repeat-containing protein At5g27270 (1038 aa).

The span at 23–38 (SRNSRISIKSSSSSSK) shows a compositional bias: low complexity. Residues 23 to 69 (SRNSRISIKSSSSSSKVRPDPWSLSDGNPEKPKPRYERPKHPLSDDD) form a disordered region. Residues 50-69 (NPEKPKPRYERPKHPLSDDD) are compositionally biased toward basic and acidic residues. PPR repeat units lie at residues 187–221 (SVVV…GCEP), 222–256 (DAVA…RILL), 257–291 (STSV…GVPP), 292–326 (NEFT…GFVP), 327–361 (EEVT…GIVP), 362–396 (SNYT…KIPA), 397–431 (DEVI…NLLA), 432–466 (DEKT…DIPL), 467–501 (SRFA…GLPD), 502–535 (ASSC…QVHF), 536–570 (DIEL…ARVK), 601–631 (DVMA…MFKT), 634–668 (GSSA…GLRM), 669–699 (EEET…AGES), 703–737 (GKSV…GCDP), 738–772 (GAVT…NIEL), 773–807 (DTVG…GVPC), 808–842 (SIQT…GLYL), 843–877 (DEKI…GIKP), 878–912 (GTPS…GRCT), 913–947 (DLST…GIPL), 948–982 (SHSH…GISP), and 983–1017 (DSAC…SVED).

The protein belongs to the PPR family. P subfamily.

The protein is Pentatricopeptide repeat-containing protein At5g27270 (EMB976) of Arabidopsis thaliana (Mouse-ear cress).